Reading from the N-terminus, the 220-residue chain is Ribonuclease HII (220 aa).

Positions 32-220 (KHIAGIDEAG…FAPIKGCFDC (189 aa)) constitute an RNase H type-2 domain. A divalent metal cation-binding residues include Asp-38, Glu-39, and Asp-130.

Belongs to the RNase HII family. Requires Mn(2+) as cofactor. It depends on Mg(2+) as a cofactor.

The protein localises to the cytoplasm. It carries out the reaction Endonucleolytic cleavage to 5'-phosphomonoester.. Functionally, endonuclease that specifically degrades the RNA of RNA-DNA hybrids. The protein is Ribonuclease HII of Brucella abortus (strain 2308).